A 32-amino-acid chain; its full sequence is DNA-binding protein HU (32 aa).

Belongs to the bacterial histone-like protein family.

Functionally, histone-like DNA-binding protein which is capable of wrapping DNA to stabilize it, and thus to prevent its denaturation under extreme environmental conditions. This Synechocystis sp. (strain PCC 6701) protein is DNA-binding protein HU (hup).